A 229-amino-acid polypeptide reads, in one-letter code: MNIKAPVITIDGPSGSGKGTIAGKLAKHLGWCLLDSGALYRLLAFAARNHGVDLTNEESLKLLAAHLDVQFLGATENHPQRIILEGDDVTDDLRNEQVGAWASQVAALPAVRDALLQRQRAFQEPPGLVADGRDMGTVVFPDAPLKIFLTASAEERARRRYLQLKGKVDGVSLSSLLDEIRARDERDTQRAVAPLKPAADAIQLDSTELSIDQVLQRILSEIAIRDIAG.

Residue 12 to 20 participates in ATP binding; it reads GPSGSGKGT.

This sequence belongs to the cytidylate kinase family. Type 1 subfamily.

The protein localises to the cytoplasm. It carries out the reaction CMP + ATP = CDP + ADP. It catalyses the reaction dCMP + ATP = dCDP + ADP. In Pseudomonas fluorescens (strain ATCC BAA-477 / NRRL B-23932 / Pf-5), this protein is Cytidylate kinase.